Here is a 309-residue protein sequence, read N- to C-terminus: Aspartate carbamoyltransferase catalytic subunit (309 aa).

2 residues coordinate carbamoyl phosphate: arginine 58 and threonine 59. Lysine 86 is a binding site for L-aspartate. Residues arginine 108, histidine 136, and glutamine 139 each coordinate carbamoyl phosphate. L-aspartate is bound by residues arginine 170 and arginine 224. The carbamoyl phosphate site is built by glycine 266 and proline 267.

The protein belongs to the aspartate/ornithine carbamoyltransferase superfamily. ATCase family. Heterododecamer (2C3:3R2) of six catalytic PyrB chains organized as two trimers (C3), and six regulatory PyrI chains organized as three dimers (R2).

The enzyme catalyses carbamoyl phosphate + L-aspartate = N-carbamoyl-L-aspartate + phosphate + H(+). It functions in the pathway pyrimidine metabolism; UMP biosynthesis via de novo pathway; (S)-dihydroorotate from bicarbonate: step 2/3. Functionally, catalyzes the condensation of carbamoyl phosphate and aspartate to form carbamoyl aspartate and inorganic phosphate, the committed step in the de novo pyrimidine nucleotide biosynthesis pathway. The polypeptide is Aspartate carbamoyltransferase catalytic subunit (Campylobacter concisus (strain 13826)).